A 351-amino-acid polypeptide reads, in one-letter code: MAAAVNSGSSLPLFDCPTWAGKPPPGLHLDVVKGDKLIEKLIIDEKKYYLFGRNPDLCDFTIDHQSCSRVHAALVYHKHLKRVFLIDLNSTHGTFLGHIRLEPHKPQQIPIDSTVSFGASTRAYTLREKPQTLPSAVKGDEKMGGEDDELKGLLGLPEEETELDNLTEFNTAHNKRISTLTIEEGNLDIQRPKRKRKNSRVTFSEDDEIINPEDVDPSVGRFRNMVQTAVVPVKKKRMEGSGSLGLEESGSRRMQNFAFSGGLYGGLPPTHSETGSQPHGIHGTALIGGLPMPYPNLAPDVDLTPVVPSAVAINPTPNPAVYNPEAVNEPKKKKYAKEAWPGKKPTPSLLI.

The interval 1-142 is interaction with CDC5L, SF3B1 and MELK; that stretch reads MAAAVNSGSS…LPSAVKGDEK (142 aa). The FHA domain maps to 49–101; that stretch reads YLFGRNPDLCDFTIDHQSCSRVHAALVYHKHLKRVFLIDLNSTHGTFLGHIRL. The interval 143–224 is interaction with EED; it reads MGGEDDELKG…VDPSVGRFRN (82 aa). Residue T161 is modified to Phosphothreonine. Phosphoserine is present on residues S178 and S199. 2 short sequence motifs (nuclear localization signal) span residues 185-209 and 210-240; these read GNLD…DDEI and INPE…RMEG. An involved in PP-1 inhibition region spans residues 191 to 200; sequence RPKRKRKNSR. The involved in PP-1 binding stretch occupies residues 200–203; it reads RVTF. The residue at position 204 (S204) is a Phosphoserine. S249 carries the phosphoserine modification. The residue at position 264 (Y264) is a Phosphotyrosine. The interval 310 to 329 is interaction with EED; that stretch reads AVAINPTPNPAVYNPEAVNE. Residues 314–351 are disordered; the sequence is NPTPNPAVYNPEAVNEPKKKKYAKEAWPGKKPTPSLLI. The interval 330 to 351 is RNA-binding; that stretch reads PKKKKYAKEAWPGKKPTPSLLI. The interval 331 to 337 is involved in PP-1 inhibition; sequence KKKKYAK. Position 335 is a phosphotyrosine (Y335).

Interacts with phosphorylated CDC5L, SF3B1 and MELK. Part of the spliceosome. Interacts with PPP1CA, PPP1CB and PPP1CC. Interacts with EED. Part of a complex consisting of PPP1R8, EED, HDAC2 and PP-1. May be inactivated by phosphorylation on Ser-199 or Ser-204.

The protein resides in the nucleus. It localises to the nucleus speckle. Its function is as follows. Inhibitor subunit of the major nuclear protein phosphatase-1 (PP-1). It has RNA-binding activity but does not cleave RNA and may target PP-1 to RNA-associated substrates. May also be involved in pre-mRNA splicing. Binds DNA and might act as a transcriptional repressor. Essential for cell proliferation and early embryonic development. In Mus musculus (Mouse), this protein is Nuclear inhibitor of protein phosphatase 1 (Ppp1r8).